The sequence spans 266 residues: Glucosamine-6-phosphate deaminase (266 aa).

Asp-72 (proton acceptor; for enolization step) is an active-site residue. The active-site For ring-opening step is the Asp-141. Residue His-143 is the Proton acceptor; for ring-opening step of the active site. The active-site For ring-opening step is Glu-148.

This sequence belongs to the glucosamine/galactosamine-6-phosphate isomerase family. NagB subfamily. In terms of assembly, homohexamer.

The catalysed reaction is alpha-D-glucosamine 6-phosphate + H2O = beta-D-fructose 6-phosphate + NH4(+). Its pathway is amino-sugar metabolism; N-acetylneuraminate degradation; D-fructose 6-phosphate from N-acetylneuraminate: step 5/5. With respect to regulation, allosterically activated by N-acetylglucosamine 6-phosphate (GlcNAc6P). In terms of biological role, catalyzes the reversible isomerization-deamination of glucosamine 6-phosphate (GlcN6P) to form fructose 6-phosphate (Fru6P) and ammonium ion. In Aliivibrio fischeri (strain ATCC 700601 / ES114) (Vibrio fischeri), this protein is Glucosamine-6-phosphate deaminase.